The primary structure comprises 344 residues: 5-formaminoimidazole-4-carboxamide-1-(beta)-D-ribofuranosyl 5'-monophosphate synthetase (344 aa).

The 5-amino-1-(5-phospho-beta-D-ribosyl)imidazole-4-carboxamide site is built by H31 and S96. Residues 130–324 (MELLQRAGVP…YFDRPMDMGE (195 aa)) form the ATP-grasp domain. ATP-binding positions include 153-198 (PVIV…VPAY) and E220. N240 serves as a coordination point for 5-amino-1-(5-phospho-beta-D-ribosyl)imidazole-4-carboxamide. Mg(2+) contacts are provided by E279 and E292.

The protein belongs to the phosphohexose mutase family. The cofactor is Mg(2+). Requires Mn(2+) as cofactor.

It carries out the reaction 5-amino-1-(5-phospho-beta-D-ribosyl)imidazole-4-carboxamide + formate + ATP = 5-formamido-1-(5-phospho-D-ribosyl)imidazole-4-carboxamide + ADP + phosphate. It functions in the pathway purine metabolism; IMP biosynthesis via de novo pathway; 5-formamido-1-(5-phospho-D-ribosyl)imidazole-4-carboxamide from 5-amino-1-(5-phospho-D-ribosyl)imidazole-4-carboxamide (formate route): step 1/1. Catalyzes the ATP- and formate-dependent formylation of 5-aminoimidazole-4-carboxamide-1-beta-d-ribofuranosyl 5'-monophosphate (AICAR) to 5-formaminoimidazole-4-carboxamide-1-beta-d-ribofuranosyl 5'-monophosphate (FAICAR) in the absence of folates. The chain is 5-formaminoimidazole-4-carboxamide-1-(beta)-D-ribofuranosyl 5'-monophosphate synthetase from Pyrobaculum neutrophilum (strain DSM 2338 / JCM 9278 / NBRC 100436 / V24Sta) (Thermoproteus neutrophilus).